Reading from the N-terminus, the 243-residue chain is MIREIFNSIMGEGKYIGRRFIFVRFAGCPLNCVYCDEESKGYFNRVEKIPGSGEFETLQKMEIEDIINAIDKLKTPDLFAVSFTGGEPLLYHKQIKEIAEILKDKGYRTFLESNGMFPERIFYFDIASIDIKLKEHFEYIKDEDYEKLYKNELKTIKKLYNLNSDIYAKVVIMEETNIEDVKIIAKDLSDIGNITLCIQPVTPHGNIKSPSQRKLFEIMEACGEYLKDNVMLTIQMHKYLGML.

Substrate is bound by residues 9 to 11 (IMG) and Arg24. Residues 15–243 (YIGRRFIFVR…IQMHKYLGML (229 aa)) form the Radical SAM core domain. Positions 28, 32, and 35 each coordinate [4Fe-4S] cluster. Thr84 provides a ligand contact to substrate. Residue Gly86 coordinates S-adenosyl-L-methionine.

It belongs to the radical SAM superfamily. 7-carboxy-7-deazaguanine synthase family. Homodimer. Requires [4Fe-4S] cluster as cofactor. S-adenosyl-L-methionine serves as cofactor. The cofactor is Mg(2+).

It catalyses the reaction 6-carboxy-5,6,7,8-tetrahydropterin + H(+) = 7-carboxy-7-deazaguanine + NH4(+). It participates in purine metabolism; 7-cyano-7-deazaguanine biosynthesis. Catalyzes the complex heterocyclic radical-mediated conversion of 6-carboxy-5,6,7,8-tetrahydropterin (CPH4) to 7-carboxy-7-deazaguanine (CDG), a step common to the biosynthetic pathways of all 7-deazapurine-containing compounds. This is 7-carboxy-7-deazaguanine synthase from Methanocaldococcus jannaschii (strain ATCC 43067 / DSM 2661 / JAL-1 / JCM 10045 / NBRC 100440) (Methanococcus jannaschii).